An 864-amino-acid polypeptide reads, in one-letter code: Alanine--tRNA ligase (864 aa).

Residues H553, H557, C655, and H659 each coordinate Zn(2+). Residues 828–847 (VGGKGGGRPDMAQAGGKDPS) are disordered.

Belongs to the class-II aminoacyl-tRNA synthetase family. Zn(2+) is required as a cofactor.

It localises to the cytoplasm. It carries out the reaction tRNA(Ala) + L-alanine + ATP = L-alanyl-tRNA(Ala) + AMP + diphosphate. In terms of biological role, catalyzes the attachment of alanine to tRNA(Ala) in a two-step reaction: alanine is first activated by ATP to form Ala-AMP and then transferred to the acceptor end of tRNA(Ala). Also edits incorrectly charged Ser-tRNA(Ala) and Gly-tRNA(Ala) via its editing domain. This chain is Alanine--tRNA ligase, found in Hydrogenovibrio crunogenus (strain DSM 25203 / XCL-2) (Thiomicrospira crunogena).